The sequence spans 388 residues: MCHKMMNKFQQRLHHTTSTPLFKTCVYFSNWSVYQKKHFPQDIPIEYYTHIFYAFILIDEQTGKLKFSDEWCDLQMPQPSPNQSITGNLQQFYEMKKKNRHLKLIMSIGGWGTCHLFESVVSNDTKFDNFVNSTIEFAEKYGFDGVDIDWEYPKNSTQAAKLVELLARLRNKLNSKYIITVAAPGGSDNIEILKIQEMDKYLTFWNLMCYDFAGEGWSSKTAFHSNLFGNNGDNSLNASDVVQTYINKGVHPTKLILGMPMYGRIFHGVDRPEIGIPFTKERKSGCIEADVVDYNKFGDTFDYEDFDPRKVGALKYDSHSKQLITFDNLQCARIKASFIQSRQLGGGMWWDSAGDVSVTNDGCLVKNFVDQLGGVEVLEKSANNLHGC.

The GH18 domain maps to 22–375; sequence FKTCVYFSNW…KNFVDQLGGV (354 aa). 2 N-linked (GlcNAc...) asparagine glycosylation sites follow: Asn30 and Asn82. Chitin-binding positions include 82–83 and 109–112; these read NQ and GGWG. N-linked (GlcNAc...) asparagine glycans are attached at residues Asn123 and Asn132. Glu151 (proton donor) is an active-site residue. Tyr152 serves as a coordination point for chitin. Asn155 is a glycosylation site (N-linked (GlcNAc...) asparagine). 208 to 211 serves as a coordination point for chitin; sequence MCYD. Asn237 carries N-linked (GlcNAc...) asparagine glycosylation. Chitin is bound at residue Trp350.

This sequence belongs to the glycosyl hydrolase 18 family. Chitinase class V subfamily.

The protein resides in the secreted. The enzyme catalyses Random endo-hydrolysis of N-acetyl-beta-D-glucosaminide (1-&gt;4)-beta-linkages in chitin and chitodextrins.. Its function is as follows. Chitinase involved in the remodeling of chitin in the fungal cell wall. Plays a role in sporulation. The protein is Chitinase 4 (CHT4) of Candida albicans (strain SC5314 / ATCC MYA-2876) (Yeast).